A 353-amino-acid chain; its full sequence is Phosphoribosylformylglycinamidine cyclo-ligase (353 aa).

Belongs to the AIR synthase family.

The protein resides in the cytoplasm. It carries out the reaction 2-formamido-N(1)-(5-O-phospho-beta-D-ribosyl)acetamidine + ATP = 5-amino-1-(5-phospho-beta-D-ribosyl)imidazole + ADP + phosphate + H(+). The protein operates within purine metabolism; IMP biosynthesis via de novo pathway; 5-amino-1-(5-phospho-D-ribosyl)imidazole from N(2)-formyl-N(1)-(5-phospho-D-ribosyl)glycinamide: step 2/2. The sequence is that of Phosphoribosylformylglycinamidine cyclo-ligase from Dinoroseobacter shibae (strain DSM 16493 / NCIMB 14021 / DFL 12).